The chain runs to 503 residues: Probable cytosol aminopeptidase (503 aa).

Mn(2+) contacts are provided by Lys-271 and Asp-276. The active site involves Lys-283. Asp-294, Asp-353, and Glu-355 together coordinate Mn(2+). Arg-357 is an active-site residue.

This sequence belongs to the peptidase M17 family. Mn(2+) is required as a cofactor.

The protein resides in the cytoplasm. The catalysed reaction is Release of an N-terminal amino acid, Xaa-|-Yaa-, in which Xaa is preferably Leu, but may be other amino acids including Pro although not Arg or Lys, and Yaa may be Pro. Amino acid amides and methyl esters are also readily hydrolyzed, but rates on arylamides are exceedingly low.. The enzyme catalyses Release of an N-terminal amino acid, preferentially leucine, but not glutamic or aspartic acids.. Presumably involved in the processing and regular turnover of intracellular proteins. Catalyzes the removal of unsubstituted N-terminal amino acids from various peptides. This chain is Probable cytosol aminopeptidase, found in Chlorobaculum parvum (strain DSM 263 / NCIMB 8327) (Chlorobium vibrioforme subsp. thiosulfatophilum).